The following is a 389-amino-acid chain: GTPase Obg (389 aa).

Residues 1–159 (MKFVDEAVIK…RELRLELLLL (159 aa)) form the Obg domain. The 174-residue stretch at 160-333 (ADVGMLGLPN…LCYKLADFME (174 aa)) folds into the OBG-type G domain. Residues 166–173 (GLPNAGKS), 191–195 (FTTLI), 213–216 (DIPG), 283–286 (NKVD), and 314–316 (SAV) contribute to the GTP site. Residues S173 and T193 each contribute to the Mg(2+) site. Residues 359–389 (NQGEVITEDDDDDWDDWDDEEDDGHVIYVRE) are disordered. Residues 364–381 (ITEDDDDDWDDWDDEEDD) show a composition bias toward acidic residues.

The protein belongs to the TRAFAC class OBG-HflX-like GTPase superfamily. OBG GTPase family. Monomer. Requires Mg(2+) as cofactor.

Its subcellular location is the cytoplasm. In terms of biological role, an essential GTPase which binds GTP, GDP and possibly (p)ppGpp with moderate affinity, with high nucleotide exchange rates and a fairly low GTP hydrolysis rate. Plays a role in control of the cell cycle, stress response, ribosome biogenesis and in those bacteria that undergo differentiation, in morphogenesis control. The chain is GTPase Obg from Vibrio vulnificus (strain CMCP6).